The following is a 292-amino-acid chain: ATP synthase subunit a (292 aa).

Transmembrane regions (helical) follow at residues 39 to 59 (QILG…FYKL), 73 to 93 (FLLL…DLLG), 102 to 122 (YFLM…LGGI), 128 to 148 (SLTF…VMGI), 172 to 192 (TFIP…SISL), 196 to 216 (GNIL…IFIF), and 231 to 251 (VFAG…AGVL).

It belongs to the ATPase A chain family. As to quaternary structure, F-type ATPases have 2 components, CF(1) - the catalytic core - and CF(0) - the membrane proton channel. CF(1) has five subunits: alpha(3), beta(3), gamma(1), delta(1), epsilon(1). CF(0) has three main subunits: a(1), b(2) and c(9-12). The alpha and beta chains form an alternating ring which encloses part of the gamma chain. CF(1) is attached to CF(0) by a central stalk formed by the gamma and epsilon chains, while a peripheral stalk is formed by the delta and b chains.

Its subcellular location is the cell membrane. In terms of biological role, key component of the proton channel; it plays a direct role in the translocation of protons across the membrane. The sequence is that of ATP synthase subunit a from Mycoplasma genitalium (strain ATCC 33530 / DSM 19775 / NCTC 10195 / G37) (Mycoplasmoides genitalium).